The primary structure comprises 512 residues: Ankyrin repeat domain-containing protein SOWAHC (512 aa).

2 positions are modified to phosphoserine: Ser-82 and Ser-125. A disordered region spans residues 126–248 (LGLGGEVSDQ…AEEESSVGAS (123 aa)). Positions 173–186 (PPQGEAEGGSSPSG) are enriched in low complexity. Ser-205 carries the post-translational modification Phosphoserine. Over residues 214–228 (PGDGNAGGRSRGGGD) the composition is skewed to gly residues. Low complexity predominate over residues 229 to 248 (SDTASLASSSAEEESSVGAS). 2 ANK repeats span residues 288–317 (TGFT…KHQL) and 327–357 (GGYT…DVDI). Arg-395 bears the Omega-N-methylarginine mark. Residues 427-500 (HVPEGWTGGS…EERSLRGYSS (74 aa)) are disordered. Positions 453 to 462 (MKPRLNKIRF) are enriched in basic residues. Acidic residues predominate over residues 481-492 (EEGEEEEEEEEE).

It belongs to the SOWAH family.

This is Ankyrin repeat domain-containing protein SOWAHC (Sowahc) from Mus musculus (Mouse).